A 548-amino-acid polypeptide reads, in one-letter code: Glucose-6-phosphate isomerase 1 (548 aa).

The Proton donor role is filled by Glu-353. Residues His-384 and Lys-512 contribute to the active site.

The protein belongs to the GPI family.

The protein localises to the cytoplasm. The enzyme catalyses alpha-D-glucose 6-phosphate = beta-D-fructose 6-phosphate. Its pathway is carbohydrate biosynthesis; gluconeogenesis. It functions in the pathway carbohydrate degradation; glycolysis; D-glyceraldehyde 3-phosphate and glycerone phosphate from D-glucose: step 2/4. In terms of biological role, catalyzes the reversible isomerization of glucose-6-phosphate to fructose-6-phosphate. The sequence is that of Glucose-6-phosphate isomerase 1 from Neisseria gonorrhoeae (strain ATCC 700825 / FA 1090).